Consider the following 267-residue polypeptide: MNALLSNPFKRGLLRGETQIGLWLSSTSSYMAEIAATSGYDWLLIDGEHAPNTIQDLYHQLQAIAPYASQPVIRPVEGNRSLIKQVLDIGARTLLVPMVDTAEQAREVVSATRYPPIGSRGVGAGVARAARWGRVENYMAEANDELCLLIQVESRTALENLDAILEVDGIDGVFIGPADLSASLGYPDDAGHPDVQRVIEQSIRRIRAAGKAAGFLAVDPAMAEKCLAWGANFVAVGVDTMLYTQALDRRLAMFKSDSAQPQEKTSY.

The active-site Proton acceptor is His49. Gln151 serves as a coordination point for substrate. Residue Glu153 coordinates Mg(2+). Residues Ala178 and Asp179 each coordinate substrate. Asp179 is a binding site for Mg(2+).

Belongs to the HpcH/HpaI aldolase family. KDR aldolase subfamily. In terms of assembly, homohexamer. Mg(2+) is required as a cofactor.

It catalyses the reaction 2-dehydro-3-deoxy-L-rhamnonate = (S)-lactaldehyde + pyruvate. Functionally, catalyzes the reversible retro-aldol cleavage of 2-keto-3-deoxy-L-rhamnonate (KDR) to pyruvate and lactaldehyde. The protein is 2-keto-3-deoxy-L-rhamnonate aldolase of Klebsiella pneumoniae subsp. pneumoniae (strain ATCC 700721 / MGH 78578).